The primary structure comprises 196 residues: 7-methyl-GTP pyrophosphatase (196 aa).

Aspartate 69 serves as the catalytic Proton acceptor.

Belongs to the Maf family. YceF subfamily. Requires a divalent metal cation as cofactor.

The protein resides in the cytoplasm. It carries out the reaction N(7)-methyl-GTP + H2O = N(7)-methyl-GMP + diphosphate + H(+). In terms of biological role, nucleoside triphosphate pyrophosphatase that hydrolyzes 7-methyl-GTP (m(7)GTP). May have a dual role in cell division arrest and in preventing the incorporation of modified nucleotides into cellular nucleic acids. This chain is 7-methyl-GTP pyrophosphatase, found in Photorhabdus laumondii subsp. laumondii (strain DSM 15139 / CIP 105565 / TT01) (Photorhabdus luminescens subsp. laumondii).